The sequence spans 111 residues: Large ribosomal subunit protein bL21 (111 aa).

It belongs to the bacterial ribosomal protein bL21 family. Part of the 50S ribosomal subunit. Contacts protein L20.

This protein binds to 23S rRNA in the presence of protein L20. This Thermosynechococcus vestitus (strain NIES-2133 / IAM M-273 / BP-1) protein is Large ribosomal subunit protein bL21.